Reading from the N-terminus, the 142-residue chain is Large ribosomal subunit protein uL13 (142 aa).

This sequence belongs to the universal ribosomal protein uL13 family. In terms of assembly, part of the 50S ribosomal subunit.

In terms of biological role, this protein is one of the early assembly proteins of the 50S ribosomal subunit, although it is not seen to bind rRNA by itself. It is important during the early stages of 50S assembly. In Alkaliphilus metalliredigens (strain QYMF), this protein is Large ribosomal subunit protein uL13.